The following is a 354-amino-acid chain: V-type proton ATPase subunit C (354 aa).

This sequence belongs to the V-ATPase C subunit family. V-ATPase is a heteromultimeric enzyme composed of a peripheral catalytic V1 complex (components A to H) attached to an integral membrane V0 proton pore complex (components: a, c, c', c'' and d).

The protein localises to the vacuole membrane. Subunit of the peripheral V1 complex of vacuolar ATPase. Subunit C is necessary for the assembly of the catalytic sector of the enzyme and is likely to have a specific function in its catalytic activity. V-ATPase is responsible for acidifying a variety of intracellular compartments in eukaryotic cells. This is V-type proton ATPase subunit C (VATC) from Hordeum vulgare (Barley).